Reading from the N-terminus, the 118-residue chain is Large ribosomal subunit protein bL20 (118 aa).

It belongs to the bacterial ribosomal protein bL20 family.

Its function is as follows. Binds directly to 23S ribosomal RNA and is necessary for the in vitro assembly process of the 50S ribosomal subunit. It is not involved in the protein synthesizing functions of that subunit. The sequence is that of Large ribosomal subunit protein bL20 from Hamiltonella defensa subsp. Acyrthosiphon pisum (strain 5AT).